The sequence spans 211 residues: Interleukin-6 (211 aa).

Residues 1–24 form the signal peptide; the sequence is MKFLSARDFQPVAFLGLMLLTATA. C70 and C76 form a disulfide bridge. S79 carries the post-translational modification Phosphoserine. C99 and C109 form a disulfide bridge.

The protein belongs to the IL-6 superfamily. In terms of assembly, component of a hexamer of two molecules each of IL6, IL6R and IL6ST; first binds to IL6R to associate with the signaling subunit IL6ST. Interacts with IL6R (via the N-terminal ectodomain); this interaction may be affected by IL6R-binding with SORL1, hence decreasing IL6 cis signaling. Interacts with SORL1 (via the N-terminal ectodomain); this interaction leads to IL6 internalization and lysosomal degradation. May form a trimeric complex with the soluble SORL1 ectodomain and soluble IL6R receptor; this interaction might stabilize circulating IL6, hence promoting IL6 trans signaling.

It localises to the secreted. In terms of biological role, cytokine with a wide variety of biological functions in immunity, tissue regeneration, and metabolism. Binds to IL6R, then the complex associates to the signaling subunit IL6ST/gp130 to trigger the intracellular IL6-signaling pathway. The interaction with the membrane-bound IL6R and IL6ST stimulates 'classic signaling', whereas the binding of IL6 and soluble IL6R to IL6ST stimulates 'trans-signaling'. Alternatively, 'cluster signaling' occurs when membrane-bound IL6:IL6R complexes on transmitter cells activate IL6ST receptors on neighboring receiver cells. Its function is as follows. IL6 is a potent inducer of the acute phase response. Rapid production of IL6 contributes to host defense during infection and tissue injury, but excessive IL6 synthesis is involved in disease pathology. In the innate immune response, is synthesized by myeloid cells, such as macrophages and dendritic cells, upon recognition of pathogens through toll-like receptors (TLRs) at the site of infection or tissue injury. In the adaptive immune response, is required for the differentiation of B-cells into immunoglolin-secreting cells. Plays a major role in the differentiation of CD4(+) T cell subsets. Essential factor for the development of T follicular helper (Tfh) cells that are required for the induction of germinal-center formation. Together with IL21, controls the early generation of Tfh cells and are critical for an effective antibody response to acute viral infection. Required to drive naive CD4(+) T cells to the Th17 lineage, through 'cluster signaling' by dendritic cells. Also required for proliferation of myeloma cells and the survival of plasmablast cells. Functionally, acts as an essential factor in bone homeostasis and on vessels directly or indirectly by induction of VEGF, resulting in increased angiogenesis activity and vascular permeability. Induces, through 'trans-signaling' and synergistically with IL1B and TNF, the production of VEGF. Involved in metabolic controls, is discharged into the bloodstream after muscle contraction increasing lipolysis and improving insulin resistance. 'Trans-signaling' in central nervous system regulates energy and glucose homeostasis. Mediates, through GLP-1, crosstalk between insulin-sensitive tissues, intestinal L cells and pancreatic islets to adapt to changes in insulin demand. Also acts as a myokine. Plays a protective role during liver injury, being required for maintenance of tissue regeneration. Also has a pivotal role in iron metabolism by regulating HAMP/hepcidin expression upon inflammation or bacterial infection. Through activation of IL6ST-YAP-NOTCH pathway, induces inflammation-induced epithelial regeneration. The sequence is that of Interleukin-6 from Rattus norvegicus (Rat).